Reading from the N-terminus, the 711-residue chain is Early transcription factor 82 kDa subunit (711 aa).

The protein belongs to the poxviridae VETF large subunit family. As to quaternary structure, heterodimer of a 70 kDa and a 82 kDa subunit. Part of the early transcription complex composed of ETF, RAP94, and the DNA-directed RNA polymerase.

The protein resides in the virion. Its function is as follows. Acts with RNA polymerase to initiate transcription from early gene promoters. Is recruited by the RPO-associated protein of 94 kDa (RAP94) to form the early transcription complex, which also contains the core RNA polymerase. ETF heterodimer binds to early gene promoters. The chain is Early transcription factor 82 kDa subunit (VETFL) from Oryctolagus cuniculus (Rabbit).